We begin with the raw amino-acid sequence, 44 residues long: Photosystem II reaction center protein K (44 aa).

The propeptide occupies Met-1–Ala-7. Residues Leu-23 to Phe-43 traverse the membrane as a helical segment.

It belongs to the PsbK family. As to quaternary structure, PSII is composed of 1 copy each of membrane proteins PsbA, PsbB, PsbC, PsbD, PsbE, PsbF, PsbH, PsbI, PsbJ, PsbK, PsbL, PsbM, PsbT, PsbX, PsbY, PsbZ, Psb30/Ycf12, at least 3 peripheral proteins of the oxygen-evolving complex and a large number of cofactors. It forms dimeric complexes.

The protein resides in the plastid. The protein localises to the chloroplast thylakoid membrane. Functionally, one of the components of the core complex of photosystem II (PSII). PSII is a light-driven water:plastoquinone oxidoreductase that uses light energy to abstract electrons from H(2)O, generating O(2) and a proton gradient subsequently used for ATP formation. It consists of a core antenna complex that captures photons, and an electron transfer chain that converts photonic excitation into a charge separation. The chain is Photosystem II reaction center protein K from Trieres chinensis (Marine centric diatom).